Consider the following 249-residue polypeptide: Probable phosphatase VV2_1469 (249 aa).

Residues His8, His10, His16, His41, Glu74, His102, His132, Asp194, and His196 each contribute to the Zn(2+) site.

It belongs to the PHP family. It depends on Zn(2+) as a cofactor.

The protein is Probable phosphatase VV2_1469 of Vibrio vulnificus (strain CMCP6).